Reading from the N-terminus, the 798-residue chain is Bromodomain-containing protein 2 (798 aa).

M1 carries the N-acetylmethionine modification. The disordered stretch occupies residues 1 to 21; it reads MLQNVTPHKLPGEGNAGLLGL. T6 is modified (phosphothreonine). Residue S36 is modified to Phosphoserine. Positions 53–72 are disordered; it reads LQLAPANPPPPEVSNPKKPG. A Bromo 1 domain is found at 73–179; the sequence is RVTNQLQYLH…KIFLQKVASM (107 aa). 6 residues coordinate a protein: D111, Y154, N155, K156, D159, and D160. Disordered stretches follow at residues 267 to 348, 455 to 648, and 735 to 798; these read PPAQ…LSEQ, EPLE…KRQL, and EKRL…SDSG. Residues 284 to 297 show a composition bias toward low complexity; the sequence is TTTPTPTAILAPGS. 3 positions are modified to phosphoserine: S297, S300, and S304. Basic and acidic residues predominate over residues 315 to 331; it reads MRRESGRPIKPPRKDLP. A Bromo 2 domain is found at 343-452; the sequence is GKLSEQLKHC…DVFEFRYAKM (110 aa). Positions 480–512 are enriched in acidic residues; the sequence is SSEESSSESSSEEEEEEDEEDEEEESESSDSEE. Basic residues predominate over residues 542–564; it reads KPKRKREKKEKKKKRKAEKHRGR. A Nuclear localization signal motif is present at residues 553-557; that stretch reads KKKRK. The NET domain occupies 630–712; the sequence is DSEEEEESRP…SCLRKKPRKP (83 aa). A Phosphoserine modification is found at S631. Residues 637–648 are compositionally biased toward basic and acidic residues; the sequence is SRPMSYDEKRQL. A compositionally biased stretch (low complexity) spans 772-792; that stretch reads SASSSSSDSSSSSSSSSSSDT.

Belongs to the BET family. As to quaternary structure, homodimer. Interacts with E2F1. Interacts with (acetylated) STAT3; promoting STAT3 recruitment to chromatin. Interacts with CTCF; promoting BRD2 recruitment to chromatin.

It is found in the nucleus. The protein resides in the chromosome. Functionally, chromatin reader protein that specifically recognizes and binds histone H4 acetylated at 'Lys-5' and 'Lys-12' (H4K5ac and H4K12ac, respectively), thereby controlling gene expression and remodeling chromatin structures. Recruits transcription factors and coactivators to target gene sites, and activates RNA polymerase II machinery for transcriptional elongation. Plays a key role in genome compartmentalization via its association with CTCF and cohesin: recruited to chromatin by CTCF and promotes formation of topologically associating domains (TADs) via its ability to bind acetylated histones, contributing to CTCF boundary formation and enhancer insulation. Also recognizes and binds acetylated non-histone proteins, such as STAT3. Involved in inflammatory response by regulating differentiation of naive CD4(+) T-cells into T-helper Th17: recognizes and binds STAT3 acetylated at 'Lys-87', promoting STAT3 recruitment to chromatin. In addition to acetylated lysines, also recognizes and binds lysine residues on histones that are both methylated and acetylated on the same side chain to form N6-acetyl-N6-methyllysine (Kacme), an epigenetic mark of active chromatin associated with increased transcriptional initiation. Specifically binds histone H4 acetyl-methylated at 'Lys-5' and 'Lys-12' (H4K5acme and H4K12acme, respectively). The sequence is that of Bromodomain-containing protein 2 (Brd2) from Rattus norvegicus (Rat).